The primary structure comprises 206 residues: Dephospho-CoA kinase (206 aa).

In terms of domain architecture, DPCK spans isoleucine 4–phenylalanine 200. Glycine 12 to threonine 17 provides a ligand contact to ATP.

This sequence belongs to the CoaE family.

Its subcellular location is the cytoplasm. The catalysed reaction is 3'-dephospho-CoA + ATP = ADP + CoA + H(+). Its pathway is cofactor biosynthesis; coenzyme A biosynthesis; CoA from (R)-pantothenate: step 5/5. Functionally, catalyzes the phosphorylation of the 3'-hydroxyl group of dephosphocoenzyme A to form coenzyme A. This chain is Dephospho-CoA kinase, found in Shigella flexneri.